Here is a 336-residue protein sequence, read N- to C-terminus: Cytoskeleton protein RodZ (336 aa).

At 1–111 the chain is on the cytoplasmic side; the sequence is MNTEATHDQN…LGKRRKKRDG (111 aa). An HTH cro/C1-type domain is found at 19–71; the sequence is LRNAREQLGLSQQAVAERLCLKVSTVRDIEEDKAPSDLASTFLRGYIRSYARL. Residues 30–49 constitute a DNA-binding region (H-T-H motif); that stretch reads QQAVAERLCLKVSTVRDIEE. Residues 112-132 form a helical; Signal-anchor for type II membrane protein membrane-spanning segment; the sequence is WLMSFTWLVLFVVVGLTGAWW. The Periplasmic portion of the chain corresponds to 133–336; sequence WQNHKAQQEE…TLNAEPTPAQ (204 aa). The disordered stretch occupies residues 155–243; it reads NADKDSGQSV…PSALPTSQAG (89 aa). The segment covering 161–175 has biased composition (polar residues); sequence GQSVPLDTGAVTSQD. Composition is skewed to low complexity over residues 176 to 214 and 221 to 243; these read TTPAQTAPAPATPVDSTAATQTQTPAPTAAATQNTVVAP and TAATSAAPAATETPSALPTSQAG.

It belongs to the RodZ family.

The protein resides in the cell inner membrane. Functionally, cytoskeletal protein that is involved in cell-shape control through regulation of the length of the long axis. The chain is Cytoskeleton protein RodZ from Salmonella newport (strain SL254).